The primary structure comprises 279 residues: Proto-oncogene FRAT1 (279 aa).

Disordered stretches follow at residues 1-24 and 56-76; these read MPCRREEEEEAGEEAEGEEEEEDS and AQHSPASPCGPPGAPLRAPGP. The span at 7–24 shows a compositional bias: acidic residues; that stretch reads EEEEAGEEAEGEEEEEDS. Ser-88 is subject to Phosphoserine. Disordered stretches follow at residues 136–200 and 228–279; these read GPSA…DDPH and RAKL…VPGS. An involved in GSK-3 binding region spans residues 198 to 220; that stretch reads DPHRLLQQLVLSGNLIKEAVRRL. Residues Ser-249 and Ser-252 each carry the phosphoserine modification.

This sequence belongs to the GSK-3-binding protein family. Binds DVL1. Binds GSK-3 and prevent GSK-3-dependent phosphorylation. Phosphorylated.

It localises to the cytoplasm. Functionally, positively regulates the Wnt signaling pathway by stabilizing beta-catenin through the association with GSK-3. May play a role in tumor progression and collaborate with PIM1 and MYC in lymphomagenesis. The protein is Proto-oncogene FRAT1 (FRAT1) of Homo sapiens (Human).